We begin with the raw amino-acid sequence, 364 residues long: Probable dual-specificity RNA methyltransferase RlmN (364 aa).

The active-site Proton acceptor is the glutamate 106. The region spanning 112 to 350 (YPQRNTVCIS…SCTVRDTRGR (239 aa)) is the Radical SAM core domain. A disulfide bridge connects residues cysteine 119 and cysteine 356. Cysteine 126, cysteine 130, and cysteine 133 together coordinate [4Fe-4S] cluster. S-adenosyl-L-methionine is bound by residues 177–178 (GE), serine 211, 234–236 (SLH), and asparagine 313. The S-methylcysteine intermediate role is filled by cysteine 356.

Belongs to the radical SAM superfamily. RlmN family. Requires [4Fe-4S] cluster as cofactor.

It localises to the cytoplasm. It carries out the reaction adenosine(2503) in 23S rRNA + 2 reduced [2Fe-2S]-[ferredoxin] + 2 S-adenosyl-L-methionine = 2-methyladenosine(2503) in 23S rRNA + 5'-deoxyadenosine + L-methionine + 2 oxidized [2Fe-2S]-[ferredoxin] + S-adenosyl-L-homocysteine. The catalysed reaction is adenosine(37) in tRNA + 2 reduced [2Fe-2S]-[ferredoxin] + 2 S-adenosyl-L-methionine = 2-methyladenosine(37) in tRNA + 5'-deoxyadenosine + L-methionine + 2 oxidized [2Fe-2S]-[ferredoxin] + S-adenosyl-L-homocysteine. Its function is as follows. Specifically methylates position 2 of adenine 2503 in 23S rRNA and position 2 of adenine 37 in tRNAs. The protein is Probable dual-specificity RNA methyltransferase RlmN of Mycobacterium marinum (strain ATCC BAA-535 / M).